We begin with the raw amino-acid sequence, 201 residues long: Peptide deformylase (201 aa).

The span at 1-17 (MANNFSQLARKSKTNSP) shows a compositional bias: polar residues. Positions 1–24 (MANNFSQLARKSKTNSPIEKVSKE) are disordered. Fe cation is bound by residues cysteine 121 and histidine 163. Glutamate 164 is a catalytic residue. Histidine 167 contacts Fe cation.

It belongs to the polypeptide deformylase family. Fe(2+) is required as a cofactor.

It catalyses the reaction N-terminal N-formyl-L-methionyl-[peptide] + H2O = N-terminal L-methionyl-[peptide] + formate. Its function is as follows. Removes the formyl group from the N-terminal Met of newly synthesized proteins. Requires at least a dipeptide for an efficient rate of reaction. N-terminal L-methionine is a prerequisite for activity but the enzyme has broad specificity at other positions. The protein is Peptide deformylase of Prochlorococcus marinus subsp. pastoris (strain CCMP1986 / NIES-2087 / MED4).